The primary structure comprises 66 residues: COP-associated protein (66 aa).

Residues 1-66 (MKVTFQVPSI…ALLDAGQEVV (66 aa)) form the HMA domain. Cu cation is bound by residues C12 and C15.

Part of a cation-transporting system which is associated with copper export out of the H.pylori cells. The sequence is that of COP-associated protein (copP) from Helicobacter pylori (strain J99 / ATCC 700824) (Campylobacter pylori J99).